The primary structure comprises 251 residues: Cell division protein ZapD (251 aa).

This sequence belongs to the ZapD family. In terms of assembly, interacts with FtsZ.

The protein localises to the cytoplasm. Its function is as follows. Cell division factor that enhances FtsZ-ring assembly. Directly interacts with FtsZ and promotes bundling of FtsZ protofilaments, with a reduction in FtsZ GTPase activity. The protein is Cell division protein ZapD of Nitrosomonas eutropha (strain DSM 101675 / C91 / Nm57).